A 366-amino-acid polypeptide reads, in one-letter code: Galactose-1-phosphate uridylyltransferase (366 aa).

S27 is modified (phosphoserine). Residues C54 and C57 each coordinate Zn(2+). UDP-alpha-D-glucose contacts are provided by residues A63 and N79 to D80. Position 124 (H124) interacts with Zn(2+). Residue N169 coordinates UDP-alpha-D-glucose. Residue H180 participates in Zn(2+) binding. H182 functions as the Tele-UMP-histidine intermediate in the catalytic mechanism. A UDP-alpha-D-glucose-binding site is contributed by Q184. Residues E198, H297, H314, and H316 each contribute to the Fe cation site. Residues K329–V332 and F334–E335 contribute to the UDP-alpha-D-glucose site.

This sequence belongs to the galactose-1-phosphate uridylyltransferase type 1 family. In terms of assembly, homodimer. It depends on Zn(2+) as a cofactor.

It carries out the reaction alpha-D-galactose 1-phosphate + UDP-alpha-D-glucose = alpha-D-glucose 1-phosphate + UDP-alpha-D-galactose. Its pathway is carbohydrate metabolism; galactose metabolism. The protein is Galactose-1-phosphate uridylyltransferase (GAL7) of Saccharomyces cerevisiae (strain ATCC 204508 / S288c) (Baker's yeast).